A 384-amino-acid chain; its full sequence is Probable protein phosphatase 2C 42 (384 aa).

The PPM-type phosphatase domain maps to 58–358; it reads DFSMAVIQAN…DDITVIVVFL (301 aa). Positions 89, 90, 290, and 349 each coordinate Mn(2+).

It belongs to the PP2C family. Requires Mg(2+) as cofactor. Mn(2+) serves as cofactor.

The catalysed reaction is O-phospho-L-seryl-[protein] + H2O = L-seryl-[protein] + phosphate. The enzyme catalyses O-phospho-L-threonyl-[protein] + H2O = L-threonyl-[protein] + phosphate. Dephosphorylates and represses plasma membrane H(+)-ATPases (PM H(+)-ATPases, e.g. AHA1 and AHA2), thus influencing negatively plant growth and fitness. Promotes the apical hook maintenance of etiolated seedlings. This Arabidopsis thaliana (Mouse-ear cress) protein is Probable protein phosphatase 2C 42.